The primary structure comprises 43 residues: Augerpeptide hhe9.2 (43 aa).

One can recognise an EGF-like domain in the interval 2–40; the sequence is EEVGCFPNVCKNDGNCSIETSTGMTRCQCLEGYTGHVCE. Intrachain disulfides connect Cys6–Cys28, Cys11–Cys30, and Cys17–Cys39.

As to expression, expressed by the venom duct.

Its subcellular location is the secreted. This chain is Augerpeptide hhe9.2, found in Hastula hectica (Sea snail).